The primary structure comprises 315 residues: Voltage-dependent calcium channel gamma-3 subunit (315 aa).

Helical transmembrane passes span 8–28 (VQML…TIAV), 104–124 (SSVF…CVAA), 135–155 (ILSA…GIIV), and 181–201 (FGAF…HIYI). Residues 232 to 252 (RRRSSSRSTEPRSRDLSPISK) are disordered. The residue at position 248 (Ser248) is a Phosphoserine.

This sequence belongs to the PMP-22/EMP/MP20 family. CACNG subfamily. The L-type calcium channel is composed of five subunits: alpha-1, alpha-2/delta, beta and gamma. Acts as an auxiliary subunit for AMPA-selective glutamate receptors (AMPARs). Found in a complex with GRIA1, GRIA2, GRIA3, GRIA4, CNIH2, CNIH3, CACNG2, CACNG4, CACNG5, CACNG7 and CACNG8. Interacts with AP4M1 and GRIA1; associates GRIA1 with the adaptor protein complex 4 (AP-4) to target GRIA1 to the somatodendritic compartment of neurons.

Its subcellular location is the membrane. Regulates the trafficking and gating properties of AMPA-selective glutamate receptors (AMPARs). Promotes their targeting to the cell membrane and synapses and modulates their gating properties by slowing their rates of activation, deactivation and desensitization. Does not show subunit-specific AMPA receptor regulation and regulates all AMPAR subunits. Thought to stabilize the calcium channel in an inactivated (closed) state. In Bos taurus (Bovine), this protein is Voltage-dependent calcium channel gamma-3 subunit (CACNG3).